Consider the following 154-residue polypeptide: UPF0756 membrane protein EAT1b_0668 (154 aa).

Helical transmembrane passes span 5-25 (LFLLMLVLIGVISNNQSVIIA), 52-72 (WGVTIITIAVLVPIATGDIGF), 82-102 (PVGIVAFASGMFVAIAAGQGV), 107-127 (VDPVVTTALLAGTILAVGFMK), and 129-149 (IPVGPLVGAGIAALILGGYQV).

The protein belongs to the UPF0756 family.

The protein localises to the cell membrane. The polypeptide is UPF0756 membrane protein EAT1b_0668 (Exiguobacterium sp. (strain ATCC BAA-1283 / AT1b)).